The primary structure comprises 104 residues: uncharacterized protein (104 aa).

A compositionally biased stretch (basic and acidic residues) spans Pro-58–Pro-71. A disordered region spans residues Pro-58–Ala-84.

This is an uncharacterized protein from Mycobacterium tuberculosis (strain ATCC 25618 / H37Rv).